A 392-amino-acid polypeptide reads, in one-letter code: Succinyl-diaminopimelate desuccinylase (392 aa).

His76 provides a ligand contact to Zn(2+). Residue Asp78 is part of the active site. Residue Asp107 coordinates Zn(2+). The Proton acceptor role is filled by Glu143. 3 residues coordinate Zn(2+): Glu144, Glu172, and His357.

It belongs to the peptidase M20A family. DapE subfamily. In terms of assembly, homodimer. Requires Zn(2+) as cofactor. It depends on Co(2+) as a cofactor.

It carries out the reaction N-succinyl-(2S,6S)-2,6-diaminopimelate + H2O = (2S,6S)-2,6-diaminopimelate + succinate. It participates in amino-acid biosynthesis; L-lysine biosynthesis via DAP pathway; LL-2,6-diaminopimelate from (S)-tetrahydrodipicolinate (succinylase route): step 3/3. Catalyzes the hydrolysis of N-succinyl-L,L-diaminopimelic acid (SDAP), forming succinate and LL-2,6-diaminopimelate (DAP), an intermediate involved in the bacterial biosynthesis of lysine and meso-diaminopimelic acid, an essential component of bacterial cell walls. This Helicobacter hepaticus (strain ATCC 51449 / 3B1) protein is Succinyl-diaminopimelate desuccinylase.